The chain runs to 145 residues: AN1-type zinc finger protein 2A (145 aa).

2 AN1-type zinc fingers span residues 4-52 (PDLG…QKDV) and 94-142 (KIFT…RPTI). Positions 10, 15, 25, 28, 33, 36, 42, 44, 100, 105, 115, 118, 123, 126, 132, and 134 each coordinate Zn(2+).

It is found in the cytoplasm. The protein localises to the nucleus. The polypeptide is AN1-type zinc finger protein 2A (ZFAND2A) (Homo sapiens (Human)).